Here is a 607-residue protein sequence, read N- to C-terminus: Glucose-6-phosphate isomerase, glycosomal (607 aa).

Glu-411 functions as the Proton donor in the catalytic mechanism. Active-site residues include His-442 and Lys-571. Residues 605–607 carry the Microbody targeting signal motif; sequence SHL.

This sequence belongs to the GPI family. As to quaternary structure, homodimer.

Its subcellular location is the glycosome. The catalysed reaction is alpha-D-glucose 6-phosphate = beta-D-fructose 6-phosphate. The protein operates within carbohydrate degradation; glycolysis; D-glyceraldehyde 3-phosphate and glycerone phosphate from D-glucose: step 2/4. In Trypanosoma brucei brucei, this protein is Glucose-6-phosphate isomerase, glycosomal (PGI).